The chain runs to 886 residues: Protein O-mannosyltransferase 1 (886 aa).

Composition is skewed to polar residues over residues 1–10 (MSATYTNTIT) and 18–34 (VRQQQQHQWTGSDLSGE). Disordered stretches follow at residues 1-37 (MSATYTNTITQRRKTAKVRQQQQHQWTGSDLSGESNE) and 88-161 (RGSV…KTAN). Residues 105-139 (PTPVATPKQASPSPTSDRSRSLSRSPSPSRSRSLS) are compositionally biased toward low complexity. N-linked (GlcNAc...) asparagine glycans are attached at residues asparagine 161 and asparagine 242. 4 consecutive transmembrane segments (helical) span residues 256 to 276 (MPIFWFRFLPAMCGSLLAPAV), 310 to 330 (VLMESMLLLATTVGIACLLRF), 349 to 369 (VCLGAAGTVKYVGFLALGLAF), and 398 to 418 (LLIFVGIPLAVYLGVFYIHFK). MIR domains lie at 450–511 (PLAV…VKRP), 522–579 (PDII…VEIL), and 585–642 (GDIW…VEEH). Helical transmembrane passes span 727 to 747 (ILLWYTATMGILVYAGLLAFY), 791 to 811 (LFLHNYLPAFVFKLLLLCFVV), and 835 to 855 (LMLILWLVGVLSIFSKFIPFS).

It belongs to the glycosyltransferase 39 family. As to quaternary structure, interacts with tw/POMT2. In terms of tissue distribution, at the cellular blastoderm stage, expression accumulates in the ventrally located mesoderm primordium. At germ band extension, mesoderm expression is seen as stripes of strong expression. A very strong signal is also detected in the invaginating gut. As the germ band retracts, mesodermal expression decays and becomes restricted to somatic muscle precursors. After dorsal closure, expression has disappeared from the mesoderm and remains in the endoderm. Some expression is detected in a few cells of the head and the pharyngeal muscles.

It is found in the endoplasmic reticulum membrane. It catalyses the reaction a di-trans,poly-cis-dolichyl beta-D-mannosyl phosphate + L-seryl-[protein] = 3-O-(alpha-D-mannosyl)-L-seryl-[protein] + a di-trans,poly-cis-dolichyl phosphate + H(+). The enzyme catalyses a di-trans,poly-cis-dolichyl beta-D-mannosyl phosphate + L-threonyl-[protein] = 3-O-(alpha-D-mannosyl)-L-threonyl-[protein] + a di-trans,poly-cis-dolichyl phosphate + H(+). It participates in protein modification; protein glycosylation. Rt/POMT1 and tw/POMT2 function as a protein O-mannosyltransferase in association with each other to generate and maintain normal muscle development. The protein is Protein O-mannosyltransferase 1 of Drosophila melanogaster (Fruit fly).